A 982-amino-acid chain; its full sequence is Mitochondrial DNA mismatch repair protein mutS homolog (982 aa).

Position 698-705 (698-705 (SVNGAGKS)) interacts with ATP. Residues 905–951 (CEICGAPADAVHHIKPKSEHKKLCNRKLNRRSNLVPVCSSCHLDIHR) enclose the HNH domain.

It belongs to the DNA mismatch repair MutS family.

It is found in the mitochondrion. Functionally, may be involved in DNA-mismatch repair. The chain is Mitochondrial DNA mismatch repair protein mutS homolog from Sarcophyton glaucum (Toadstool umbrella leather coral).